We begin with the raw amino-acid sequence, 413 residues long: Prophage integrase IntA (413 aa).

The 82-residue stretch at 105 to 186 (NTFLLVAERW…RINEVMIYAQ (82 aa)) folds into the Core-binding (CB) domain. Positions 209 to 386 (KNMPSIRPDQ…DYLEQRRPMM (178 aa)) constitute a Tyr recombinase domain. Catalysis depends on residues arginine 248, lysine 275, histidine 337, arginine 340, and histidine 363. The active-site O-(3'-phospho-DNA)-tyrosine intermediate is tyrosine 373.

This sequence belongs to the 'phage' integrase family.

Functionally, integrase is necessary for integration of the phage into the host genome by site-specific recombination. In conjunction with excisionase, integrase is also necessary for excision of the prophage from the host genome. Part of the cryptic P4-like prophage CP4-57, it excises the prophage when overexpressed, which also requires integration host factor (encoded by ihfA and ihfB). Overexpression of AlpA leads to excision of the CP4-57 prophage, which inactivates ssrA (the gene upstream of the prophage) that encodes tmRNA which is required to rescue stalled ribosomes in a process known as trans-translation. This is Prophage integrase IntA (intA) from Escherichia coli (strain K12).